The following is a 116-amino-acid chain: MSGSPPQLDPEIAARLKRTPDGLVPAIVQQYDTGEVLMLAWMDDEALRRTLTTRAATYWSRSRGEYWVKGATSGNTQRVVSVSLDCDGDTLLVKVDQTGGACHTGDRTCFDADRLL.

D85 is a Mg(2+) binding site. C86 provides a ligand contact to Zn(2+). Mg(2+) is bound by residues D87 and D89. Zn(2+) contacts are provided by C102 and C109.

It belongs to the PRA-CH family. Homodimer. The cofactor is Mg(2+). It depends on Zn(2+) as a cofactor.

The protein resides in the cytoplasm. The enzyme catalyses 1-(5-phospho-beta-D-ribosyl)-5'-AMP + H2O = 1-(5-phospho-beta-D-ribosyl)-5-[(5-phospho-beta-D-ribosylamino)methylideneamino]imidazole-4-carboxamide. It participates in amino-acid biosynthesis; L-histidine biosynthesis; L-histidine from 5-phospho-alpha-D-ribose 1-diphosphate: step 3/9. Catalyzes the hydrolysis of the adenine ring of phosphoribosyl-AMP. This Thermobifida fusca (strain YX) protein is Phosphoribosyl-AMP cyclohydrolase.